The chain runs to 272 residues: HTH-type transcriptional repressor AllR (272 aa).

Residues 1–20 are disordered; that stretch reads MTEVRRRGRPGQAEPTAQKG. The region spanning 21 to 83 is the HTH iclR-type domain; it reads AQALERGIAI…SQLGWWHIGL (63 aa). The H-T-H motif DNA-binding region spans 43-62; the sequence is VSDISGSLDLPLSTTFRLLK. The IclR-ED domain occupies 98 to 267; it reads VLSVAGPFMH…AKDISTALGL (170 aa). Glyoxylate is bound by residues 154-156, Asp207, Cys217, and 234-236; these read SGA and SIS.

Its function is as follows. Negative regulator of allantoin and glyoxylate utilization operons. Binds to the gcl promoter and to the allS-allA intergenic region. The protein is HTH-type transcriptional repressor AllR (allR) of Salmonella paratyphi A (strain ATCC 9150 / SARB42).